The sequence spans 445 residues: RCC1 domain-containing protein RUG3, mitochondrial (445 aa).

A mitochondrion-targeting transit peptide spans 1 to 22 (MAALSHRLRSFTRRFSSTRTTQ). 7 RCC1 repeats span residues 47 to 101 (TLQL…DSSS), 118 to 169 (DGDL…ALTH), 171 to 221 (GDVF…AITE), 222 to 279 (SGEL…ALTK), 280 to 331 (EGQL…ALTE), 333 to 383 (GKVL…AITD), and 385 to 442 (GELW…CLVS).

Interacts with ATM. In terms of tissue distribution, mostly expressed in roots and rosette leaves of young seedlings, and, to a lower extent, in the flowers and siliques of mature plants. Preferentially expressed in the vascular tissues.

The protein resides in the mitochondrion. In terms of biological role, regulates DNA damage response (DDR) synergistically with ATM. Together with ATM, involved in the splicing of the ND2/NAD2 mRNA. Required for the accumulation of mitochondrial respiratory chain complex I. Negative regulator of plant responses to abscisic acid (ABA). May have a pivotal role in vegetative growth and the phase transition from vegetative to reproductive growth. The sequence is that of RCC1 domain-containing protein RUG3, mitochondrial from Arabidopsis thaliana (Mouse-ear cress).